A 247-amino-acid chain; its full sequence is MSQVNMRDMLKAGVHFGHQTRYWNPKMGKYIFGARNKIHIINLEKTLPMFNDALSFVEKLAAGKNKILFVGTKRSAGKIVREEAARCGSPFVDHRWLGGMLTNYKTIRASIKRLRELETQSQDGTFAKLTKKEALMRSRDLEKLDRSLGGIKDMGGLPDALFVIDVDHERIAITEANKLGIPVIGVVDTNSSPEGVDYIIPGNDDAIRAIQLYMGAMADAVIRGRSNAGGATEEFVEEAPAAESAEG.

The protein belongs to the universal ribosomal protein uS2 family.

The sequence is that of Small ribosomal subunit protein uS2 from Ectopseudomonas mendocina (strain ymp) (Pseudomonas mendocina).